The sequence spans 120 residues: Small cysteine and glycine repeat-containing protein 2 (120 aa).

Positions 4 to 104 are 19 X 2 AA repeats of CG; it reads CGCGGCGGCG…TCHSCGCGCG (101 aa).

It belongs to the KRTAP type 28 family.

In terms of biological role, in the hair cortex, hair keratin intermediate filaments are embedded in an interfilamentous matrix, consisting of hair keratin-associated proteins (KRTAP), which are essential for the formation of a rigid and resistant hair shaft through their extensive disulfide bond cross-linking with abundant cysteine residues of hair keratins. The matrix proteins include the high-sulfur and high-glycine-tyrosine keratins. The sequence is that of Small cysteine and glycine repeat-containing protein 2 from Homo sapiens (Human).